The primary structure comprises 365 residues: PHD finger protein 6 (365 aa).

Position 2 is an N-acetylserine (Ser-2). 2 consecutive short sequence motifs (nuclear localization signal) follow at residues 13 to 16 (RQRK) and 129 to 133 (RKHKK). Residues 14-52 (QRKCGFCKSNRDKECGQLLISENQKVAAHHKCMLFSSAL) form a C2HC pre-PHD-type 1 zinc finger. Positions 14-132 (QRKCGFCKSN…IYMVYCRKHK (119 aa)) are extended PHD1 domain (ePHD1). The PHD-type 1 zinc-finger motif lies at 80-132 (LMCSLCHCPGATIGCDVKTCHRTYHYHCALHDKAQIREKPSQGIYMVYCRKHK). A phosphoserine mark is found at Ser-138, Ser-145, and Ser-155. Positions 139 to 211 (EADLEESFNE…RSSPSDTRPK (73 aa)) are disordered. A Nucleolar localization signal motif is present at residues 157 to 169 (KSKKKSRKGRPRK). The segment covering 157 to 171 (KSKKKSRKGRPRKTN) has biased composition (basic residues). A Glycyl lysine isopeptide (Lys-Gly) (interchain with G-Cter in SUMO2) cross-link involves residue Lys-173. A phosphoserine mark is found at Ser-183 and Ser-199. The C2HC pre-PHD-type 2 zinc finger occupies 209–249 (RPKCGFCHVGEEENEARGKLHIFNAKKAAAHYKCMLFSSGT). Positions 209–330 (RPKCGFCHVG…IYKLYCKNHS (122 aa)) are extended PHD2 domain (ePHD2). Lys-227 is covalently cross-linked (Glycyl lysine isopeptide (Lys-Gly) (interchain with G-Cter in SUMO2)). A PHD-type 2 zinc finger spans residues 278–330 (MKCTLCSQPGATIGCEIKACVKTYHYHCGVQDKAKYIENMSRGIYKLYCKNHS). Positions 330 to 365 (SGNDERDEEDEERESKSRGKVEIDQQQLTQQQLNGN) are disordered. The span at 342 to 352 (RESKSRGKVEI) shows a compositional bias: basic and acidic residues. Over residues 354–365 (QQQLTQQQLNGN) the composition is skewed to low complexity. Position 358 is a phosphothreonine (Thr-358).

Interacts with UBTF. Interacts with the NuRD complex component RBBP4 (via the nucleolar localization motif), the interaction mediates transcriptional repression activity.

It is found in the nucleus. Its subcellular location is the nucleolus. The protein localises to the chromosome. The protein resides in the centromere. It localises to the kinetochore. Transcriptional regulator that associates with ribosomal RNA promoters and suppresses ribosomal RNA (rRNA) transcription. The protein is PHD finger protein 6 (PHF6) of Pongo abelii (Sumatran orangutan).